The sequence spans 228 residues: Ferric nitrobindin-like protein (228 aa).

The disordered stretch occupies residues 1–21 (MTSDEVRDGAGSPADSSKGNK). The short motif at 75–81 (GVWRGEG) is the GXWXGXG element.

It belongs to the nitrobindin family.

The polypeptide is Ferric nitrobindin-like protein (Mycobacterium leprae (strain TN)).